The sequence spans 234 residues: Covalently-linked cell wall protein 14 (234 aa).

The signal sequence occupies residues 1 to 22 (MASFLKISTLIAIVSTLQTTLA). The 87-residue stretch at 23-109 (APPACLLACV…SSEESSASAS (87 aa)) folds into the CFEM domain. 4 disulfides stabilise this stretch: cysteine 27-cysteine 66, cysteine 31-cysteine 61, cysteine 41-cysteine 49, and cysteine 51-cysteine 82. Aspartate 46 lines the heme pocket. A compositionally biased stretch (low complexity) spans 86 to 207 (SSQSSSSESE…ASSSESTTAT (122 aa)). The interval 86–208 (SSQSSSSESE…SSSESTTATG (123 aa)) is disordered. Glycine 215 is lipidated: GPI-anchor amidated glycine. A propeptide spans 216 to 234 (SAAKVGLGALVGLVGAVLL) (removed in mature form).

The protein belongs to the CCW14 family. Post-translationally, the GPI-anchor is attached to the protein in the endoplasmic reticulum and serves to target the protein to the cell surface. There, the glucosamine-inositol phospholipid moiety is cleaved off and the GPI-modified mannoprotein is covalently attached via its lipidless GPI glycan remnant to the 1,6-beta-glucan of the outer cell wall layer.

It localises to the secreted. The protein localises to the cell wall. The protein resides in the membrane. Beta-glucan associated cell wall protein involved in cell wall structure. May serve as cross-linking or coat-forming wall protein. The protein is Covalently-linked cell wall protein 14 (SSR1) of Candida albicans (strain SC5314 / ATCC MYA-2876) (Yeast).